Here is a 647-residue protein sequence, read N- to C-terminus: S-adenosyl-L-methionine-dependent tRNA 4-demethylwyosine synthase (647 aa).

A Flavodoxin-like domain is found at 50–198; it reads GKIFFISQTG…AFQDWCDGVI (149 aa). FMN contacts are provided by residues 56-60 and 142-174; these read SQTGT and VFGV…LEMI. The 244-residue stretch at 316-559 folds into the Radical SAM core domain; that stretch reads YGIESHRCME…LSLKSNGEYE (244 aa). Positions 332, 336, and 339 each coordinate [4Fe-4S] cluster.

The protein belongs to the TYW1 family. [4Fe-4S] cluster is required as a cofactor.

It catalyses the reaction N(1)-methylguanosine(37) in tRNA(Phe) + pyruvate + S-adenosyl-L-methionine = 4-demethylwyosine(37) in tRNA(Phe) + 5'-deoxyadenosine + L-methionine + CO2 + H2O. It participates in tRNA modification; wybutosine-tRNA(Phe) biosynthesis. Probable component of the wybutosine biosynthesis pathway. Wybutosine is a hyper modified guanosine with a tricyclic base found at the 3'-position adjacent to the anticodon of eukaryotic phenylalanine tRNA. Catalyzes the condensation of N-methylguanine with 2 carbon atoms from pyruvate to form the tricyclic 4-demethylwyosine, an intermediate in wybutosine biosynthesis. The polypeptide is S-adenosyl-L-methionine-dependent tRNA 4-demethylwyosine synthase (TYW1) (Arabidopsis thaliana (Mouse-ear cress)).